Consider the following 412-residue polypeptide: Class E basic helix-loop-helix protein 40 (412 aa).

The segment at 1 to 139 (MERIPSAQPP…LSGRNVETGQ (139 aa)) is essential for interaction with BMAL1, E-box binding and repressor activity against the CLOCK-BMAL1 heterodimer. The bHLH domain maps to 52-107 (TYKLPHRLIEKKRRDRINECIAQLKDLLPEHLKLTTLGHLEKAVVLELTLKHVKAL). The interval 75–79 (LKDLL) is necessary for interaction with RXRA and repressor activity against RXRA. In terms of domain architecture, Orange spans 142–175 (FCSGFQTCAREVLQYLAKHENTRDLKSSQLVTHL). Residue Lys-159 forms a Glycyl lysine isopeptide (Lys-Gly) (interchain with G-Cter in SUMO1, SUMO2 and SUMO3) linkage. Lys-167 participates in a covalent cross-link: Glycyl lysine isopeptide (Lys-Gly) (interchain with G-Cter in SUMO2). Positions 182–303 (LLQGGTSRKP…LSDDEGHFTS (122 aa)) are disordered. Ser-235 is subject to Phosphoserine. A compositionally biased stretch (basic and acidic residues) spans 248 to 271 (ESEKGDLRSEQPCFKSDHGRRFTM). A Glycyl lysine isopeptide (Lys-Gly) (interchain with G-Cter in SUMO1); alternate cross-link involves residue Lys-279. A Glycyl lysine isopeptide (Lys-Gly) (interchain with G-Cter in SUMO1, SUMO2 and SUMO3); alternate cross-link involves residue Lys-279. A Glycyl lysine isopeptide (Lys-Gly) (interchain with G-Cter in SUMO2); alternate cross-link involves residue Lys-279. Lys-288 participates in a covalent cross-link: Glycyl lysine isopeptide (Lys-Gly) (interchain with G-Cter in SUMO2). Residue Ser-383 is modified to Phosphoserine.

As to quaternary structure, homodimer. Heterodimer with BHLHE41/DEC2. Interacts with TCF3/E47. Interacts with ubiquitin-conjugating enzyme UBE2I/UBC9. Interacts with HDAC1, SUMO1, RXRA and BMAL1. Post-translationally, ubiquitinated; which may lead to proteasomal degradation. In terms of processing, sumoylation inhibits its ubiquitination and promotes its negative regulation of the CLOCK-BMAL1 heterodimer transcriptional activator activity. In terms of tissue distribution, expressed in cartilage, spleen, intestine, lung, and to a lesser extent in heart, brain, liver, muscle and stomach.

It is found in the cytoplasm. The protein localises to the nucleus. Functionally, transcriptional repressor involved in the regulation of the circadian rhythm by negatively regulating the activity of the clock genes and clock-controlled genes. Acts as the negative limb of a novel autoregulatory feedback loop (DEC loop) which differs from the one formed by the PER and CRY transcriptional repressors (PER/CRY loop). Both these loops are interlocked as it represses the expression of PER1/2 and in turn is repressed by PER1/2 and CRY1/2. Represses the activity of the circadian transcriptional activator: CLOCK-BMAL1|BMAL2 heterodimer by competing for the binding to E-box elements (5'-CACGTG-3') found within the promoters of its target genes. Negatively regulates its own expression and the expression of DBP and BHLHE41/DEC2. Acts as a corepressor of RXR and the RXR-LXR heterodimers and represses the ligand-induced RXRA and NR1H3/LXRA transactivation activity. May be involved in the regulation of chondrocyte differentiation via the cAMP pathway. Represses the transcription of NR0B2 and attentuates the transactivation of NR0B2 by the CLOCK-BMAL1 complex. Drives the circadian rhythm of blood pressure through transcriptional repression of ATP1B1 in the cardiovascular system. This Homo sapiens (Human) protein is Class E basic helix-loop-helix protein 40 (BHLHE40).